The chain runs to 928 residues: G-protein coupled receptor family C group 6 member A (928 aa).

Positions methionine 1–serine 20 are cleaved as a signal peptide. Residues cysteine 21–alanine 594 lie on the Extracellular side of the membrane. N-linked (GlcNAc...) asparagine glycosylation is found at asparagine 332 and asparagine 555. Residues leucine 595 to phenylalanine 615 form a helical membrane-spanning segment. The Cytoplasmic portion of the chain corresponds to threonine 616–leucine 630. Residues valine 631–isoleucine 651 form a helical membrane-spanning segment. At glycine 652–serine 669 the chain is on the extracellular side. The chain crosses the membrane as a helical span at residues phenylalanine 670–phenylalanine 690. Residues aspartate 691–proline 706 are Cytoplasmic-facing. Residues isoleucine 707–alanine 727 traverse the membrane as a helical segment. Over proline 728 to leucine 750 the chain is Extracellular. A helical membrane pass occupies residues alanine 751–phenylalanine 771. Topologically, residues lysine 772–lysine 784 are cytoplasmic. The chain crosses the membrane as a helical span at residues phenylalanine 785 to alanine 805. Residues threonine 806 to leucine 812 lie on the Extracellular side of the membrane. A helical transmembrane segment spans residues proline 813–phenylalanine 833. At proline 834–isoleucine 928 the chain is on the cytoplasmic side.

This sequence belongs to the G-protein coupled receptor 3 family. As to quaternary structure, homodimer; disulfide-linked. N-glycosylated. In terms of tissue distribution, high expression in soft palate. Weak expression in kidney, liver, lung and brain. No expression detected in heart, testis, skeletal muscle amd spleen.

It is found in the cell membrane. Its function is as follows. Receptor activated by multiple ligands, including osteocalcin (BGLAP), basic amino acids, and various cations. Activated by amino acids with a preference for basic amino acids such as L-Lys, L-Arg and L-ornithine but also by small and polar amino acids. The L-alpha amino acids respond is augmented by divalent cations Ca(2+) and Mg(2+). Seems to act through a G(q)/G(11) and G(i)-coupled pathway. Regulates testosterone production by acting as a ligand for uncarboxylated osteocalcin hormone: osteocalcin-binding at the surface of Leydig cells initiates a signaling response that promotes the expression of enzymes required for testosterone synthesis in a CREB-dependent manner. Mediates the non-genomic effects of androgens in multiple tissue. May coordinate nutritional and hormonal anabolic signals through the sensing of extracellular amino acids, osteocalcin, divalent ions and its responsiveness to anabolic steroids. The polypeptide is G-protein coupled receptor family C group 6 member A (Gprc6a) (Rattus norvegicus (Rat)).